Here is a 240-residue protein sequence, read N- to C-terminus: Orotidine 5'-phosphate decarboxylase (240 aa).

Residues Asp-15, Lys-37, 64–73 (DLKYHDIPNT), Thr-125, Arg-186, Gln-195, Gly-215, and Arg-216 each bind substrate. The active-site Proton donor is the Lys-66.

This sequence belongs to the OMP decarboxylase family. Type 1 subfamily. Homodimer.

It carries out the reaction orotidine 5'-phosphate + H(+) = UMP + CO2. The protein operates within pyrimidine metabolism; UMP biosynthesis via de novo pathway; UMP from orotate: step 2/2. In terms of biological role, catalyzes the decarboxylation of orotidine 5'-monophosphate (OMP) to uridine 5'-monophosphate (UMP). This Pelobacter propionicus (strain DSM 2379 / NBRC 103807 / OttBd1) protein is Orotidine 5'-phosphate decarboxylase.